The following is a 186-amino-acid chain: NADH-ubiquinone oxidoreductase 17.8 kDa subunit, mitochondrial (186 aa).

A mitochondrion-targeting transit peptide spans methionine 1 to tyrosine 26. A disordered region spans residues asparagine 22 to alanine 49. Positions tyrosine 26–alanine 49 are enriched in basic and acidic residues. Residues leucine 58–phenylalanine 78 traverse the membrane as a helical segment.

Complex I is composed of about 40 different subunits.

The protein localises to the mitochondrion inner membrane. The enzyme catalyses a ubiquinone + NADH + 5 H(+)(in) = a ubiquinol + NAD(+) + 4 H(+)(out). In terms of biological role, transfer of electrons from NADH to the respiratory chain. The immediate electron acceptor for the enzyme is believed to be ubiquinone. This chain is NADH-ubiquinone oxidoreductase 17.8 kDa subunit, mitochondrial (nuo17.8), found in Neurospora crassa (strain ATCC 24698 / 74-OR23-1A / CBS 708.71 / DSM 1257 / FGSC 987).